The sequence spans 213 residues: MKPEETGGSVYQPLDESRHVQRGVLQALGAIQILNGILILALGIFLVCLQHVSHHFRHFFFFTFYTGYPLWGAVFFISSGSLTVAAGRNPTRMLMQNSFGINIASTTIAFVGTVFLSVHLAFNTQAFKGCQSSPSPDVCISLGSSSDGLVSLMLILTLLELSVTISISAMWCLGNVCGLREAITSPPNSVESGILPEGSDSENLNTQPQASEE.

At 1–26 (MKPEETGGSVYQPLDESRHVQRGVLQ) the chain is on the cytoplasmic side. Residues 27–47 (ALGAIQILNGILILALGIFLV) form a helical membrane-spanning segment. Residues 48 to 58 (CLQHVSHHFRH) are Extracellular-facing. The chain crosses the membrane as a helical span at residues 59–79 (FFFFTFYTGYPLWGAVFFISS). Over 80–97 (GSLTVAAGRNPTRMLMQN) the chain is Cytoplasmic. Residues 98-118 (SFGINIASTTIAFVGTVFLSV) form a helical membrane-spanning segment. Residues 119-148 (HLAFNTQAFKGCQSSPSPDVCISLGSSSDG) lie on the Extracellular side of the membrane. A helical membrane pass occupies residues 149–169 (LVSLMLILTLLELSVTISISA). The Cytoplasmic portion of the chain corresponds to 170–213 (MWCLGNVCGLREAITSPPNSVESGILPEGSDSENLNTQPQASEE). The interval 189–213 (SVESGILPEGSDSENLNTQPQASEE) is disordered. Residues 201–213 (SENLNTQPQASEE) are compositionally biased toward polar residues.

The protein belongs to the MS4A family. Interacts with CDKN3. Interacts with CDKN3-CDK2 complexes through its binding to CDKN3; this interaction facilitates dissociation of cyclin A from CDKN3-CDK2 complexes. Expressed at low levels only in specific immune tissues, such as, spleen, bone marrow and peripheral blood leukocytes.

Its subcellular location is the membrane. Its function is as follows. Hematopoietic modulator for the G1-S cell cycle transition. Modulates the level of phosphorylation of cyclin-dependent kinase 2 (CDK2) through its direct binding to cyclin-dependent kinase inhibitor 3 (CDKN3/KAP). The protein is Membrane-spanning 4-domains subfamily A member 3 (Ms4a3) of Mus musculus (Mouse).